A 539-amino-acid chain; its full sequence is CTP synthase (539 aa).

The interval 1–267 is amidoligase domain; that stretch reads MTKFIFVTGG…DDLVIKRLDL (267 aa). Residue S13 participates in CTP binding. A UTP-binding site is contributed by S13. 14-19 is a binding site for ATP; it reads SLGKGI. Y54 provides a ligand contact to L-glutamine. Position 71 (D71) interacts with ATP. Mg(2+) is bound by residues D71 and E141. Residues 148–150, 188–193, and K224 each bind CTP; these read DIE and KTKPTQ. Residues 188-193 and K224 each bind UTP; that span reads KTKPTQ. 240-242 is a binding site for ATP; it reads RDA. The 243-residue stretch at 293 to 535 folds into the Glutamine amidotransferase type-1 domain; it reads TIGLVGKYVS…IEAANKYKEA (243 aa). G355 serves as a coordination point for L-glutamine. C382 serves as the catalytic Nucleophile; for glutamine hydrolysis. L-glutamine contacts are provided by residues 383–386, E406, and R463; that span reads LGMQ. Active-site residues include H508 and E510.

This sequence belongs to the CTP synthase family. Homotetramer.

The catalysed reaction is UTP + L-glutamine + ATP + H2O = CTP + L-glutamate + ADP + phosphate + 2 H(+). It catalyses the reaction L-glutamine + H2O = L-glutamate + NH4(+). It carries out the reaction UTP + NH4(+) + ATP = CTP + ADP + phosphate + 2 H(+). The protein operates within pyrimidine metabolism; CTP biosynthesis via de novo pathway; CTP from UDP: step 2/2. Allosterically activated by GTP, when glutamine is the substrate; GTP has no effect on the reaction when ammonia is the substrate. The allosteric effector GTP functions by stabilizing the protein conformation that binds the tetrahedral intermediate(s) formed during glutamine hydrolysis. Inhibited by the product CTP, via allosteric rather than competitive inhibition. In terms of biological role, catalyzes the ATP-dependent amination of UTP to CTP with either L-glutamine or ammonia as the source of nitrogen. Regulates intracellular CTP levels through interactions with the four ribonucleotide triphosphates. In Staphylococcus carnosus (strain TM300), this protein is CTP synthase.